Here is a 469-residue protein sequence, read N- to C-terminus: Arginine biosynthesis bifunctional protein ArgJ, chloroplastic (469 aa).

Positions 213, 239, 250, 337, 464, and 469 each coordinate substrate. Catalysis depends on Thr-250, which acts as the Nucleophile.

This sequence belongs to the ArgJ family. As to quaternary structure, heterodimer of an alpha and a beta chain.

It localises to the plastid. Its subcellular location is the chloroplast. The enzyme catalyses N(2)-acetyl-L-ornithine + L-glutamate = N-acetyl-L-glutamate + L-ornithine. It catalyses the reaction L-glutamate + acetyl-CoA = N-acetyl-L-glutamate + CoA + H(+). It participates in amino-acid biosynthesis; L-arginine biosynthesis; L-ornithine and N-acetyl-L-glutamate from L-glutamate and N(2)-acetyl-L-ornithine (cyclic): step 1/1. The protein operates within amino-acid biosynthesis; L-arginine biosynthesis; N(2)-acetyl-L-ornithine from L-glutamate: step 1/4. Functionally, catalyzes two activities which are involved in the cyclic version of arginine biosynthesis: the synthesis of acetylglutamate from glutamate and acetyl-CoA, and of ornithine by transacetylation between acetylornithine and glutamate. The protein is Arginine biosynthesis bifunctional protein ArgJ, chloroplastic of Ricinus communis (Castor bean).